Here is a 665-residue protein sequence, read N- to C-terminus: Mitochondrial Rho GTPase 1 (665 aa).

Over 1–634 (MTNDVIRIVV…NQDPEEETNT (634 aa)) the chain is Cytoplasmic. The region spanning 3-177 (NDVIRIVVCG…FYLCQKAVMH (175 aa)) is the Miro 1 domain. Residues 12–19 (GDEGVGKS), 61–67 (DTQFSNS), and 119–122 (NVFD) each bind GTP. 2 EF-hand domains span residues 193–228 (NAVA…CFGR) and 313–348 (EGYR…TPGI). Residues D206, D208, D210, Y212, E217, D326, D328, D330, and E337 each coordinate Ca(2+). The Miro 2 domain maps to 452 to 618 (RSVFNCFVLG…FIQLAEAAQQ (167 aa)). GTP is bound by residues 461 to 468 (GSHMSGKT), 498 to 502 (EMTGG), and 567 to 570 (LKAD). Residues 635–655 (IMPFALAGGATVLLAAAVAWI) traverse the membrane as a helical; Anchor for type IV membrane protein segment. Residues 656–665 (FKNVRVAGRE) lie on the Mitochondrial intermembrane side of the membrane.

It belongs to the mitochondrial Rho GTPase family.

It localises to the mitochondrion outer membrane. Mitochondrial GTPase involved in mitochondrial trafficking. Probably involved in control of anterograde transport of mitochondria and their subcellular distribution. The sequence is that of Mitochondrial Rho GTPase 1 (GEM1) from Yarrowia lipolytica (strain CLIB 122 / E 150) (Yeast).